Reading from the N-terminus, the 265-residue chain is GTP cyclohydrolase 1 type 2 homolog (265 aa).

Residues His-65, Asp-103, His-225, and Glu-228 each coordinate a divalent metal cation.

Belongs to the GTP cyclohydrolase I type 2/NIF3 family. As to quaternary structure, homohexamer.

The chain is GTP cyclohydrolase 1 type 2 homolog from Streptococcus pneumoniae serotype 4 (strain ATCC BAA-334 / TIGR4).